A 483-amino-acid chain; its full sequence is MAPQLLLCLILTFLWSLPEAESNVFLKSKVANRFLQRTKRANSLFEEFKSGNIERECIEERCSKEEAREAFEDDEKTETFWNVYVDGDQCSSNPCHYGGTCKDGIGSYTCTCLSGYEGKNCEYVLYKSCRVDNGDCWHFCKPVQNGIQCSCAESYLLGEDGHSCVAGGDFSCGRNIKTRNKREANLPDFQTDFSDDYDEIDENNFVETPTNFSGLVLTVQSQNATLLKKSDNPSPDIRVVNGTDCKLGECPWQALLLNDEGDGFCGGTILSPIYVLTAAHCINQTKYITVVVGEIDISSKKTGRLHSVDKIYVHQKFVPATYDYDIAIIQLKTPIQFSENVVPACLPTADFANQVLMKQNFGIVSGFGRTRERGKTSNTLKVVTLPYVDRHTCMLSSNFPITQNMFCAGYDTLPQDACQGDSGGPHITAYRDTHFITGIVSWGEGCAQTGKYGVYTKVSKFILWIKRIIRQKQPSTESSTGRL.

The first 20 residues, 1–20 (MAPQLLLCLILTFLWSLPEA), serve as a signal peptide directing secretion. Residues 21 to 40 (ESNVFLKSKVANRFLQRTKR) constitute a propeptide that is removed on maturation. The Gla domain maps to 41-86 (ANSLFEEFKSGNIERECIEERCSKEEAREAFEDDEKTETFWNVYVD). 4-carboxyglutamate is present on residues glutamate 46, glutamate 47, glutamate 54, glutamate 56, glutamate 59, glutamate 60, glutamate 65, glutamate 66, glutamate 69, glutamate 72, and glutamate 75. Cysteine 57 and cysteine 62 are joined by a disulfide. Residues 86–122 (DGDQCSSNPCHYGGTCKDGIGSYTCTCLSGYEGKNCE) form the EGF-like 1; calcium-binding domain. 11 disulfides stabilise this stretch: cysteine 90–cysteine 101, cysteine 95–cysteine 110, cysteine 112–cysteine 121, cysteine 129–cysteine 140, cysteine 136–cysteine 149, cysteine 151–cysteine 164, cysteine 172–cysteine 345, cysteine 245–cysteine 250, cysteine 265–cysteine 281, cysteine 393–cysteine 407, and cysteine 418–cysteine 446. Serine 92 is a glycosylation site (O-linked (Hex...) serine). The residue at position 103 (aspartate 103) is a (3R)-3-hydroxyaspartate. The EGF-like 2 domain maps to 125-165 (LYKSCRVDNGDCWHFCKPVQNGIQCSCAESYLLGEDGHSCV). Positions 183-238 (EANLPDFQTDFSDDYDEIDENNFVETPTNFSGLVLTVQSQNATLLKKSDNPSPDIR) are cleaved as a propeptide — activation peptide. The Peptidase S1 domain maps to 239-470 (VVNGTDCKLG…FILWIKRIIR (232 aa)). Histidine 280 serves as the catalytic Charge relay system. Asparagine 283 carries N-linked (GlcNAc...) asparagine glycosylation. The Charge relay system role is filled by aspartate 325. Serine 422 acts as the Charge relay system in catalysis.

This sequence belongs to the peptidase S1 family. As to quaternary structure, heterodimer of a light chain and a heavy chain; disulfide-linked. Post-translationally, gamma-carboxyglutamate residues are formed by vitamin K dependent carboxylation. These residues are essential for the binding of calcium. The activation peptide is cleaved by factor IXa (in the intrinsic pathway), or by factor VIIa (in the extrinsic pathway). In terms of processing, the iron and 2-oxoglutarate dependent 3-hydroxylation of aspartate and asparagine is (R) stereospecific within EGF domains. Plasma; synthesized in the liver.

The protein resides in the secreted. It catalyses the reaction Selective cleavage of Arg-|-Thr and then Arg-|-Ile bonds in prothrombin to form thrombin.. Factor Xa is a vitamin K-dependent glycoprotein that converts prothrombin to thrombin in the presence of factor Va, calcium and phospholipid during blood clotting. The chain is Coagulation factor X isoform 1 (F10) from Pseudonaja textilis (Eastern brown snake).